Here is a 77-residue protein sequence, read N- to C-terminus: Acyl carrier protein (77 aa).

The Carrier domain maps to 2–77 (SAIDKRVKEI…DAIDYITEHT (76 aa)). At S37 the chain carries O-(pantetheine 4'-phosphoryl)serine.

This sequence belongs to the acyl carrier protein (ACP) family. In terms of processing, 4'-phosphopantetheine is transferred from CoA to a specific serine of apo-ACP by AcpS. This modification is essential for activity because fatty acids are bound in thioester linkage to the sulfhydryl of the prosthetic group.

It is found in the cytoplasm. The protein operates within lipid metabolism; fatty acid biosynthesis. Its function is as follows. Carrier of the growing fatty acid chain in fatty acid biosynthesis. The polypeptide is Acyl carrier protein (Geobacter metallireducens (strain ATCC 53774 / DSM 7210 / GS-15)).